We begin with the raw amino-acid sequence, 56 residues long: Single-pass membrane and coiled-coil domain-containing protein 4 homolog (56 aa).

The tract at residues 1 to 27 is disordered; sequence MRQLPGKAAKETRKMKRERKQQNKEGH. The stretch at 9–31 forms a coiled coil; sequence AKETRKMKRERKQQNKEGHNRVV. A helical transmembrane segment spans residues 30–50; the sequence is VVTVAIPVCLAVFVMLIVYVY.

This sequence belongs to the SMCO4 family.

It is found in the membrane. In Nematostella vectensis (Starlet sea anemone), this protein is Single-pass membrane and coiled-coil domain-containing protein 4 homolog.